The chain runs to 936 residues: F-box protein dre-1 (936 aa).

A disordered region spans residues 1–67 (MSSSSSPFFH…GSSEADNPTL (67 aa)). Positions 22 to 36 (QQSPSYSQNSNSPSQ) are enriched in low complexity. Polar residues predominate over residues 48-63 (GSTSMRYSPSGSSEAD). Residues 159-205 (QDHINRLPEELLLKVFSFLPDKSLLACSSVSYRFNQISNSHEVWKEL) enclose the F-box domain. PbH1 repeat units lie at residues 405–427 (SAAP…YITD), 428–450 (NATG…WVKN), 451–473 (HANP…FTFE), 474–496 (HGQG…EVKN), 497–519 (SANP…YVHE), 520–542 (RGRG…WITS), 543–565 (HSDP…YIFG), 566–588 (EGRG…QIRS), 589–611 (QSDP…YVHE), 612–634 (KGRG…WVTT), 635–657 (GSSP…YFYD), 658–680 (QGHG…QIRT), 681–703 (GSNP…LVYN), 704–726 (GGKG…WIKT), 727–749 (DSEP…CIFN), 750–772 (RGKG…LIST), 773–795 (ESNP…EITN), and 796–818 (GATA…CVAT). Residues 843–914 (GLCLFKVSSN…LERHCHLQNV (72 aa)) form a UBR-type zinc finger.

In terms of assembly, component of a SCF ubiquitin ligase complex. Interacts (via F-box) with skr-1. Interacts with blmp-1; the interaction targets blmp-1 for proteasomal degradation. Interacts with ced-9; the interaction inhibits ced-9 activity, either directly or indirectly. In mid-embryogenesis, expression is most prominent in epidermal and intestinal cells. By the 1.5-fold stage of embryogenesis, expression is additionally detected in neurons and other cells. During larval and adult stages, highest expression is seen in epidermal seam cells and hypodermis. In larvae, strongly expressed in the P epidermal blast cells and descendents that give rise to the vulva and weakly expressed in the somatic gonad, including the gonadoblasts, the anchor cell and the distal tip cells. Some weak expression also seen in adult spermatheca and uterus. In the musculature, expressed in the pharynx, anal depressor, sex muscles, and body wall muscles. Detected in neurons of the head, tail, ventral cord and periphery. Also expressed in the embryonic tail spike cell.

It is found in the nucleus. Its subcellular location is the cytoplasm. Its pathway is protein modification; protein ubiquitination. Functionally, substrate recognition component of a SCF (SKP1-CUL1-F-box protein) E3 ubiquitin-protein ligase complex which mediates the ubiquitination and subsequent proteasomal degradation of target proteins including blmp-1. Promotes ubiquitination of snail family proteins ces-1, scrt-1 and snai-1. Heterochronic protein which is required for the timing of gonad development and epidermal seam cell differentiation. Regulates tail-spike cell death through inhibition of the apoptosis regulator ced-9. This is F-box protein dre-1 from Caenorhabditis elegans.